The sequence spans 405 residues: Deoxyguanosinetriphosphate triphosphohydrolase-like protein (405 aa).

The 145-residue stretch at R75–N219 folds into the HD domain.

Belongs to the dGTPase family. Type 2 subfamily.

This Rhizobium etli (strain ATCC 51251 / DSM 11541 / JCM 21823 / NBRC 15573 / CFN 42) protein is Deoxyguanosinetriphosphate triphosphohydrolase-like protein.